The primary structure comprises 196 residues: GTP cyclohydrolase 1 (196 aa).

3 residues coordinate Zn(2+): Cys85, His88, and Cys158.

This sequence belongs to the GTP cyclohydrolase I family. As to quaternary structure, homomer.

It catalyses the reaction GTP + H2O = 7,8-dihydroneopterin 3'-triphosphate + formate + H(+). The protein operates within cofactor biosynthesis; 7,8-dihydroneopterin triphosphate biosynthesis; 7,8-dihydroneopterin triphosphate from GTP: step 1/1. The chain is GTP cyclohydrolase 1 from Corynebacterium aurimucosum (strain ATCC 700975 / DSM 44827 / CIP 107346 / CN-1) (Corynebacterium nigricans).